The primary structure comprises 90 residues: Small ribosomal subunit protein bS20 (90 aa).

It belongs to the bacterial ribosomal protein bS20 family.

Binds directly to 16S ribosomal RNA. The sequence is that of Small ribosomal subunit protein bS20 from Mesomycoplasma hyopneumoniae (strain J / ATCC 25934 / NCTC 10110) (Mycoplasma hyopneumoniae).